The primary structure comprises 626 residues: 4-hydroxy-3-methylbut-2-en-1-yl diphosphate synthase (flavodoxin) (626 aa).

C521, C524, C555, and E562 together coordinate [4Fe-4S] cluster.

This sequence belongs to the IspG family. The cofactor is [4Fe-4S] cluster.

It catalyses the reaction (2E)-4-hydroxy-3-methylbut-2-enyl diphosphate + oxidized [flavodoxin] + H2O + 2 H(+) = 2-C-methyl-D-erythritol 2,4-cyclic diphosphate + reduced [flavodoxin]. It participates in isoprenoid biosynthesis; isopentenyl diphosphate biosynthesis via DXP pathway; isopentenyl diphosphate from 1-deoxy-D-xylulose 5-phosphate: step 5/6. Functionally, converts 2C-methyl-D-erythritol 2,4-cyclodiphosphate (ME-2,4cPP) into 1-hydroxy-2-methyl-2-(E)-butenyl 4-diphosphate. In Bacteroides fragilis (strain YCH46), this protein is 4-hydroxy-3-methylbut-2-en-1-yl diphosphate synthase (flavodoxin).